The following is a 227-amino-acid chain: uncharacterized protein (227 aa).

7 helical membrane passes run 15–34 (FIAA…FLIY), 55–77 (TFLF…ASGV), 92–114 (AFSM…YSLL), 121–140 (FPGE…TSLL), 145–167 (LVFL…VNYS), 180–202 (PLYI…FLPL), and 206–224 (FAIY…YRVL).

The protein resides in the cell membrane. This is an uncharacterized protein from Archaeoglobus fulgidus (strain ATCC 49558 / DSM 4304 / JCM 9628 / NBRC 100126 / VC-16).